The primary structure comprises 205 residues: MSVGILGTKVGMTQFFDETGLSIPVTVIQVGPCVITQIKSMSTDGYNAIQVGYKQVVEQKLSKPLLGHLKKSQSPPLKYLREYLVESIEDFEVSQVFSTNIFEVGQKVNVSSKSIGKGFSGYQKRHHFSRGPMSHGSKNHRQPGSIGAGTTPGRVYPGKNMAGQMGNKKVTIKNLQIVSINIENDLLLLKGAVPGKQGALVKVSK.

Positions 127–153 are disordered; sequence HFSRGPMSHGSKNHRQPGSIGAGTTPG.

It belongs to the universal ribosomal protein uL3 family. As to quaternary structure, part of the 50S ribosomal subunit.

It localises to the plastid. The protein resides in the chloroplast. Functionally, one of the primary rRNA binding proteins, it binds directly near the 3'-end of the 23S rRNA, where it nucleates assembly of the 50S subunit. The protein is Large ribosomal subunit protein uL3c (rpl3) of Porphyra purpurea (Red seaweed).